A 156-amino-acid chain; its full sequence is Small ribosomal subunit protein uS7 (156 aa).

Belongs to the universal ribosomal protein uS7 family. Part of the 30S ribosomal subunit. Contacts proteins S9 and S11.

Functionally, one of the primary rRNA binding proteins, it binds directly to 16S rRNA where it nucleates assembly of the head domain of the 30S subunit. Is located at the subunit interface close to the decoding center, probably blocks exit of the E-site tRNA. This is Small ribosomal subunit protein uS7 from Syntrophus aciditrophicus (strain SB).